A 452-amino-acid polypeptide reads, in one-letter code: MMITLRKLPLAVAVAAGVMSAQAMAVDFHGYARSGIGWTGSGGEQQCFQATGAQSKYRLGNECETYAELKLGQEVWKEGDKSFYFDTNVAYSVNQQNDWESTDPAFREANVQGKNLIEWLPGSTIWAGKRFYQRHDVHMIDFYYWDISGPGAGIENIDLGFGKLSLAATRSTEAGGSYTFSSQNIYDEVKDTANDVFDVRLAGLQTNPDGVLELGVDYGRANTTDGYKLADGASKDGWMFTAEHTQSMLKGYNKFVVQYATDAMTTQGKGQARGSDGSSSFTEELSDGTKINYANKVINNNGNMWRILDHGAISLGDKWDLMYVGMYQNIDWDNNLGTEWWTVGVRPMYKWTPIMSTLLEVGYDNVKSQQTGDRNNQYKITLAQQWQAGDSIWSRPAIRIFATYAKWDEKWGYIKDGDNISRYAAATNSGISTNSRGDSDEWTFGAQMEIWW.

An N-terminal signal peptide occupies residues Met1 to Ala25.

The protein belongs to the porin LamB (TC 1.B.3) family. In terms of assembly, homotrimer formed of three 18-stranded antiparallel beta-barrels, containing three independent channels.

The protein localises to the cell outer membrane. It carries out the reaction beta-maltose(in) = beta-maltose(out). In terms of biological role, involved in the transport of maltose and maltodextrins. The polypeptide is Maltoporin (Salmonella enteritidis PT4 (strain P125109)).